The primary structure comprises 2157 residues: Unconventional myosin-IXb (2157 aa).

S2 carries the post-translational modification N-acetylserine. The Ras-associating domain maps to 15–114; sequence AAYHLHIYPQ…YYFLLQERNA (100 aa). One can recognise a Myosin motor domain in the interval 146 to 953; sequence ADFDDLCNLP…ERQALQETLH (808 aa). 239–246 serves as a coordination point for ATP; sequence GESGSGKT. The interval 709 to 734 is disordered; sequence AEKAAGMSSPGAQSHPEELPRGASTP. Residues S716 and S717 each carry the phosphoserine modification. The segment at 844–855 is actin-binding; sequence KAEPFFIRCIRS. The neck or regulatory domain stretch occupies residues 940–1044; that stretch reads LKETERQALQ…CRGHLQRKSF (105 aa). 4 IQ domains span residues 957-977, 979-1000, 1001-1023, and 1024-1053; these read VRKILLLQSWFRMVLERRHFL, MKRAAVTIQACWRSYRVRRALE, RTQAAVYLQASWRGYWQRKLYRH, and QKQSIIRLQSLCRGHLQRKSFSQMISEKQK. Position 1045 is a phosphoserine (S1045). Positions 1045–2157 are tail; the sequence is SQMISEKQKA…LPPASGQTNG (1113 aa). Residues 1046 to 1071 are a coiled coil; sequence QMISEKQKAEEKEREALEAARAGAEE. Disordered stretches follow at residues 1046–1298, 1320–1410, and 1455–1484; these read QMIS…TQIQ, AAAS…GSQV, and GLEAPSGQQHRHAAGEKRTKEPGGKGKKNR. Basic and acidic residues-rich tracts occupy residues 1050 to 1063, 1109 to 1122, 1136 to 1160, 1168 to 1183, and 1191 to 1201; these read EKQKAEEKEREALE, SPLEHSSPEKEAPS, ESHEKVPSSREKRESRRQRGLEHVK, SCKEESALREPSRRVT, and LEDKKESREDE. S1114, S1115, and S1122 each carry phosphoserine. Polar residues predominate over residues 1211 to 1222; it reads ENTSQKQPTEQP. Phosphoserine occurs at positions 1242, 1253, 1261, and 1267. T1271 bears the Phosphothreonine mark. Residues S1290, S1323, and S1331 each carry the phosphoserine modification. T1346 carries the post-translational modification Phosphothreonine. 3 positions are modified to phosphoserine: S1354, S1356, and S1405. The segment covering 1467–1478 has biased composition (basic and acidic residues); the sequence is AAGEKRTKEPGG. The Phorbol-ester/DAG-type zinc-finger motif lies at 1632-1681; sequence GHVFASYQVSIPQSCEQCLSYIWLMDKALLCSVCKMTCHKKCVHKIQSHC. The region spanning 1703 to 1888 is the Rho-GAP domain; that stretch reads DSLTSDKASV…MLIKEQMRKY (186 aa). The interval 1739–1744 is interaction with RHOA; it reads AANRTR. The stretch at 1880–1901 forms a coiled coil; the sequence is LIKEQMRKYKVKMEEISQLEAA. Phosphoserine occurs at positions 1926, 1972, 1992, and 1999. Residues 1959–1989 adopt a coiled-coil conformation; that stretch reads EDREKEILIERIQSIKEEKEDITYRLPELDP. A compositionally biased stretch (basic and acidic residues) spans 1980–1993; sequence ITYRLPELDPRGSD. Residues 1980 to 2157 are disordered; the sequence is ITYRLPELDP…LPPASGQTNG (178 aa). T2005 carries the phosphothreonine modification. The span at 2021–2037 shows a compositional bias: pro residues; sequence PPAPALPCPGAPTPSPL. The residue at position 2050 (S2050) is a Phosphoserine. The segment covering 2081–2093 has biased composition (low complexity); that stretch reads PRWAPGAREAAAP. The segment covering 2095-2106 has biased composition (basic and acidic residues); sequence RRREPPARRPDQ. Phosphoserine is present on S2141.

It belongs to the TRAFAC class myosin-kinesin ATPase superfamily. Myosin family. In terms of assembly, interacts (via IQ domains) with CALM. Interacts with RHOA. Interacts (via Rho-GAP domain) with ROBO1; this inhibits the interaction with RHOA and the stimulation of RHOA GTPase activity, and thereby increases the levels of active RHOA. Detected in peripheral blood leukocytes (at protein level). Expressed predominantly in peripheral blood leukocytes and at lower levels, in thymus, spleen, testis, prostate, ovary, brain, small intestine and lung.

The protein resides in the cytoplasm. It localises to the cell cortex. It is found in the perinuclear region. The protein localises to the cytoskeleton. Functionally, myosins are actin-based motor molecules with ATPase activity. Unconventional myosins serve in intracellular movements. Binds actin with high affinity both in the absence and presence of ATP and its mechanochemical activity is inhibited by calcium ions. Also acts as a GTPase activator for RHOA. Plays a role in the regulation of cell migration via its role as RHOA GTPase activator. This is regulated by its interaction with the SLIT2 receptor ROBO1; interaction with ROBO1 impairs interaction with RHOA and subsequent activation of RHOA GTPase activity, and thereby leads to increased levels of active, GTP-bound RHOA. The polypeptide is Unconventional myosin-IXb (MYO9B) (Homo sapiens (Human)).